A 73-amino-acid polypeptide reads, in one-letter code: Putative antitoxin VapB21 (73 aa).

Belongs to the UPF0330 family.

Functionally, possibly the antitoxin component of a type II toxin-antitoxin (TA) system. Its cognate toxin is VapC21 (Potential). This Sulfurisphaera tokodaii (strain DSM 16993 / JCM 10545 / NBRC 100140 / 7) (Sulfolobus tokodaii) protein is Putative antitoxin VapB21 (vapB21).